Reading from the N-terminus, the 179-residue chain is Peptide deformylase 2 (179 aa).

Residues cysteine 102 and histidine 144 each contribute to the Fe cation site. Glutamate 145 is an active-site residue. Histidine 148 contributes to the Fe cation binding site.

The protein belongs to the polypeptide deformylase family. Fe(2+) is required as a cofactor.

It catalyses the reaction N-terminal N-formyl-L-methionyl-[peptide] + H2O = N-terminal L-methionyl-[peptide] + formate. Functionally, removes the formyl group from the N-terminal Met of newly synthesized proteins. Requires at least a dipeptide for an efficient rate of reaction. N-terminal L-methionine is a prerequisite for activity but the enzyme has broad specificity at other positions. The sequence is that of Peptide deformylase 2 from Nostoc sp. (strain PCC 7120 / SAG 25.82 / UTEX 2576).